Consider the following 186-residue polypeptide: Bifunctional protein PyrR (186 aa).

The short motif at valine 101 to threonine 113 is the PRPP-binding element.

Belongs to the purine/pyrimidine phosphoribosyltransferase family. PyrR subfamily.

The catalysed reaction is UMP + diphosphate = 5-phospho-alpha-D-ribose 1-diphosphate + uracil. Regulates the transcription of the pyrimidine nucleotide (pyr) operon in response to exogenous pyrimidines. In terms of biological role, also displays a weak uracil phosphoribosyltransferase activity which is not physiologically significant. This is Bifunctional protein PyrR from Syntrophobacter fumaroxidans (strain DSM 10017 / MPOB).